Consider the following 328-residue polypeptide: Global transcription regulator sge1 (328 aa).

2 disordered regions span residues 94 to 120 (PGEK…PRQR) and 251 to 293 (QMHQ…QYVH). 3 stretches are compositionally biased toward low complexity: residues 106–116 (KSTTQSGGISK), 251–261 (QMHQPQVHQPL), and 282–293 (AHQPQVHQQYVH).

This sequence belongs to the MIT1/WOR1 family.

The protein resides in the nucleus. In terms of biological role, global transcriptional regulator of transcription that impacts, but is not absolutely required for secondary metabolism and pathogenicity on maize. Regulates synthesis of multiple secondary metabolites, including fumonisins and fusarins. In Gibberella moniliformis (strain M3125 / FGSC 7600) (Maize ear and stalk rot fungus), this protein is Global transcription regulator sge1.